A 180-amino-acid chain; its full sequence is Large ribosomal subunit protein uL5 (180 aa).

The protein belongs to the universal ribosomal protein uL5 family. Part of the 50S ribosomal subunit; part of the 5S rRNA/L5/L18/L25 subcomplex. Contacts the 5S rRNA and the P site tRNA. Forms a bridge to the 30S subunit in the 70S ribosome.

This is one of the proteins that bind and probably mediate the attachment of the 5S RNA into the large ribosomal subunit, where it forms part of the central protuberance. In the 70S ribosome it contacts protein S13 of the 30S subunit (bridge B1b), connecting the 2 subunits; this bridge is implicated in subunit movement. Contacts the P site tRNA; the 5S rRNA and some of its associated proteins might help stabilize positioning of ribosome-bound tRNAs. This chain is Large ribosomal subunit protein uL5, found in Roseiflexus sp. (strain RS-1).